A 185-amino-acid chain; its full sequence is Ribosome-recycling factor (185 aa).

Belongs to the RRF family.

Its subcellular location is the cytoplasm. Functionally, responsible for the release of ribosomes from messenger RNA at the termination of protein biosynthesis. May increase the efficiency of translation by recycling ribosomes from one round of translation to another. In Salmonella paratyphi A (strain ATCC 9150 / SARB42), this protein is Ribosome-recycling factor.